We begin with the raw amino-acid sequence, 1471 residues long: Myosin-51 (1471 aa).

The region spanning S7–I61 is the Myosin N-terminal SH3-like domain. In terms of domain architecture, Myosin motor spans E65–R749. G159–T166 provides a ligand contact to ATP. The tract at residues L628–E650 is actin-binding. 6 IQ domains span residues S753–Q773, V776–E796, E801–L821, I824–I844, E849–R869, and K872–R892. A coiled-coil region spans residues K909–K952. A Dilute domain is found at E1171–K1417.

It belongs to the TRAFAC class myosin-kinesin ATPase superfamily. Myosin family.

The protein localises to the cytoplasm. Involved in cytokinesis. The polypeptide is Myosin-51 (myo51) (Schizosaccharomyces pombe (strain 972 / ATCC 24843) (Fission yeast)).